The chain runs to 895 residues: Catenin alpha-3 (895 aa).

Serine 56 carries the phosphoserine modification. Positions 74–111 (EKIAQEATVLKDELTASLEEVRKESEALKVSAERFTDD) form a coiled coil. Serine 160 is modified (phosphoserine). Residues 325–379 (RERIIAECNAIRQALQDLLSEYMNNAGKKERSNTLNIALDNMCKKTRDLRRQLRK) adopt a coiled-coil conformation. Serine 637 and serine 647 each carry phosphoserine. At threonine 649 the chain carries Phosphothreonine.

This sequence belongs to the vinculin/alpha-catenin family. Interacts with CTNNB1. Interacts with PKP2. As to expression, predominantly expressed in heart and testis. Expressed at lower levels in brain, kidney, liver and skeletal muscle.

It localises to the cytoplasm. The protein localises to the cytoskeleton. The protein resides in the cell junction. It is found in the desmosome. Functionally, may be involved in formation of stretch-resistant cell-cell adhesion complexes. The chain is Catenin alpha-3 from Homo sapiens (Human).